A 363-amino-acid chain; its full sequence is S-adenosylmethionine:tRNA ribosyltransferase-isomerase (363 aa).

It belongs to the QueA family. In terms of assembly, monomer.

Its subcellular location is the cytoplasm. The catalysed reaction is 7-aminomethyl-7-carbaguanosine(34) in tRNA + S-adenosyl-L-methionine = epoxyqueuosine(34) in tRNA + adenine + L-methionine + 2 H(+). It participates in tRNA modification; tRNA-queuosine biosynthesis. In terms of biological role, transfers and isomerizes the ribose moiety from AdoMet to the 7-aminomethyl group of 7-deazaguanine (preQ1-tRNA) to give epoxyqueuosine (oQ-tRNA). In Haemophilus influenzae (strain PittGG), this protein is S-adenosylmethionine:tRNA ribosyltransferase-isomerase.